The sequence spans 85 residues: COMM domain-containing protein 6 (85 aa).

The residue at position 1 (Met-1) is an N-acetylmethionine. Residues Gln-18–Val-85 enclose the COMM domain.

This sequence belongs to the COMM domain-containing protein 6 family. Component of the commander complex consisting of the CCC subcomplex and the retriever subcomplex. Component of the CCC (COMMD/CCDC22/CCDC93) subcomplex consisting of COMMD1, COMMD2, COMMD3, COMMD4, COMMD5, COMMD6, COMMD7, COMMD8, COMMD9, COMMD10, CCDC22 and CCDC93; within the complex forms a heterodimer with COMMD1. May form a homodimer with isoform 1. Interacts with RELA, RELB, NFKB1/p105. Does not interact with NFKBIB. Interacts with CCDC22, CCDC93, SCNN1B, CUL4A.

The protein resides in the nucleus. It is found in the cytoplasm. Functionally, scaffold protein in the commander complex that is essential for endosomal recycling of transmembrane cargos; the commander complex is composed of the CCC subcomplex and the retriever subcomplex. May modulate activity of cullin-RING E3 ubiquitin ligase (CRL) complexes. Down-regulates activation of NF-kappa-B. Inhibits TNF-induced NFKB1 activation. The chain is COMM domain-containing protein 6 (COMMD6) from Bos taurus (Bovine).